The following is a 164-amino-acid chain: MKVILREDFINLGKEGDIVDVKDGFARNYLLPKGFAVFSNKHNIDIFSQKKRAILKRQETRRKMAVELKEKLDKVNLEFIMQSNDSGKLFHSINSSNIADELLKLGFEIERRKIDMHHGALKAFGTYNVTIKLYEGISSVITVEIKREEKKNSLKKSKSVEKEV.

This sequence belongs to the bacterial ribosomal protein bL9 family.

Its function is as follows. Binds to the 23S rRNA. The chain is Large ribosomal subunit protein bL9 from Borrelia duttonii (strain Ly).